The chain runs to 100 residues: Urease subunit gamma (100 aa).

It belongs to the urease gamma subunit family. Heterotrimer of UreA (gamma), UreB (beta) and UreC (alpha) subunits. Three heterotrimers associate to form the active enzyme.

It is found in the cytoplasm. It carries out the reaction urea + 2 H2O + H(+) = hydrogencarbonate + 2 NH4(+). Its pathway is nitrogen metabolism; urea degradation; CO(2) and NH(3) from urea (urease route): step 1/1. The chain is Urease subunit gamma from Pseudomonas aeruginosa (strain UCBPP-PA14).